A 1482-amino-acid polypeptide reads, in one-letter code: Type VII secretion system protein EssC (1482 aa).

The Cytoplasmic portion of the chain corresponds to 1 to 229 (MHKLIIKYNK…RPPQPIQKNN (229 aa)). The chain crosses the membrane as a helical span at residues 230 to 252 (TVIWRSIIPPLVMIALTVVIFLV). The Extracellular segment spans residues 253 to 256 (RPIG). The chain crosses the membrane as a helical span at residues 257-279 (IYILMMIGMSTVTIVFGITTYFS). Residues 280-1482 (EKKKYNKDVE…EYQKIKLMEG (1203 aa)) are Cytoplasmic-facing. 2 FtsK domains span residues 652 to 846 (DDIL…QDSN) and 997 to 1183 (QGPM…NELT). Residues 672-679 (GTTGSGKS) and 1014-1021 (GSPGYGRT) each bind ATP.

It belongs to the EssC family. As to quaternary structure, homooligomer. Interacts with EsaE.

It localises to the cell membrane. Its function is as follows. Component of the type VII secretion system (Ess). Required for the secretion of substrates including EsxA and EsxB. However, unable to support secretion of the substrate protein EsxC. The chain is Type VII secretion system protein EssC from Staphylococcus aureus (strain MRSA252).